A 245-amino-acid chain; its full sequence is MLLIPAIDLKEGRCVRLRQGLMEEATVFSDSPAETALHWFEQGARRLHLVDLNGAFAGVPQNLPAIKDILAAVAKDIPVQLGGGIRDLKTIGQYLDLGLNDVIIGTAAVKNPDFVREACKAFPGRIIVGLDAKDGMAAIDGWATVTGHHVIDLAKRFEDDGVNSIIYTDIGRDGMMSGVNIDATVKLAQAVRIPVIASGGLTGLDDIRALCAAEKHGVAGAITGRAIYEGSIDFAQAQQLADSLD.

The active-site Proton acceptor is D8. Residue D131 is the Proton donor of the active site.

Belongs to the HisA/HisF family.

The protein resides in the cytoplasm. The catalysed reaction is 1-(5-phospho-beta-D-ribosyl)-5-[(5-phospho-beta-D-ribosylamino)methylideneamino]imidazole-4-carboxamide = 5-[(5-phospho-1-deoxy-D-ribulos-1-ylimino)methylamino]-1-(5-phospho-beta-D-ribosyl)imidazole-4-carboxamide. The protein operates within amino-acid biosynthesis; L-histidine biosynthesis; L-histidine from 5-phospho-alpha-D-ribose 1-diphosphate: step 4/9. This Neisseria meningitidis serogroup C / serotype 2a (strain ATCC 700532 / DSM 15464 / FAM18) protein is 1-(5-phosphoribosyl)-5-[(5-phosphoribosylamino)methylideneamino] imidazole-4-carboxamide isomerase.